Here is a 238-residue protein sequence, read N- to C-terminus: Probable transcriptional regulatory protein CHU_3516 (238 aa).

It belongs to the TACO1 family.

Its subcellular location is the cytoplasm. The chain is Probable transcriptional regulatory protein CHU_3516 from Cytophaga hutchinsonii (strain ATCC 33406 / DSM 1761 / CIP 103989 / NBRC 15051 / NCIMB 9469 / D465).